Here is a 157-residue protein sequence, read N- to C-terminus: Regenerating islet-derived protein 4 (157 aa).

The signal sequence occupies residues 1-22 (MASKCVRLLLLLSWVAGPEVLS). A disulfide bridge connects residues Cys-29 and Cys-40. The C-type lectin domain maps to 36–154 (YRSHCYGYFR…CTKRQHFLCK (119 aa)). Residues Asn-49, Asn-62, and Asn-101 are each glycosylated (N-linked (GlcNAc...) asparagine). Intrachain disulfides connect Cys-57–Cys-153 and Cys-128–Cys-145. A carbohydrate is bound by residues 97-101 (DPQKN) and 134-136 (KDK).

It localises to the secreted. Its function is as follows. Calcium-independent lectin displaying mannose-binding specificity and able to maintain carbohydrate recognition activity in an acidic environment. May be involved in inflammatory and metaplastic responses of the gastrointestinal epithelium. The polypeptide is Regenerating islet-derived protein 4 (Reg4) (Rattus norvegicus (Rat)).